Reading from the N-terminus, the 323-residue chain is tRNA dimethylallyltransferase (323 aa).

12-19 contacts ATP; it reads GPTAAGKT. 14-19 is a binding site for substrate; the sequence is TAAGKT. Interaction with substrate tRNA stretches follow at residues 37 to 40 and 161 to 165; these read DSAL and QRLTR.

It belongs to the IPP transferase family. In terms of assembly, monomer. Mg(2+) is required as a cofactor.

It carries out the reaction adenosine(37) in tRNA + dimethylallyl diphosphate = N(6)-dimethylallyladenosine(37) in tRNA + diphosphate. Functionally, catalyzes the transfer of a dimethylallyl group onto the adenine at position 37 in tRNAs that read codons beginning with uridine, leading to the formation of N6-(dimethylallyl)adenosine (i(6)A). The protein is tRNA dimethylallyltransferase of Pseudomonas fluorescens (strain ATCC BAA-477 / NRRL B-23932 / Pf-5).